Reading from the N-terminus, the 363-residue chain is Pyrimidine monooxygenase RutA (363 aa).

Residues I49–K50, N115, E124, R140–Y141, and S190 each bind FMN.

It belongs to the NtaA/SnaA/DszA monooxygenase family. RutA subfamily.

The catalysed reaction is uracil + FMNH2 + NADH + O2 = (Z)-3-ureidoacrylate + FMN + NAD(+) + H2O + H(+). It catalyses the reaction thymine + FMNH2 + NADH + O2 = (Z)-2-methylureidoacrylate + FMN + NAD(+) + H2O + H(+). Catalyzes the pyrimidine ring opening between N-3 and C-4 by an unusual flavin hydroperoxide-catalyzed mechanism, adding oxygen atoms in the process to yield ureidoacrylate peracid, that immediately reacts with FMN forming ureidoacrylate and FMN-N(5)-oxide. The FMN-N(5)-oxide reacts spontaneously with NADH to produce FMN. Requires the flavin reductase RutF to regenerate FMN in vivo. The polypeptide is Pyrimidine monooxygenase RutA (Escherichia coli O103:H2 (strain 12009 / EHEC)).